Here is a 1062-residue protein sequence, read N- to C-terminus: 3-hydroxy-3-methylglutaryl-coenzyme A reductase 2 (1062 aa).

Residues 1 to 34 (MAPTNTKDSDTPGWLHRHGTSVLGSVARQACKQP) lie on the Cytoplasmic side of the membrane. Residues 35 to 55 (IYTLVITALLATMTYTSLLEG) form a helical membrane-spanning segment. Over 56–230 (SLYNANLTRL…SFVGLIKHAQ (175 aa)) the chain is Lumenal. Asn-61 is a glycosylation site (N-linked (GlcNAc...) asparagine). Residues 231 to 251 (IIDIIIMLLAYLAMHLTFLSL) form a helical membrane-spanning segment. The 171-residue stretch at 233–403 (DIIIMLLAYL…FTFYISVLCV (171 aa)) folds into the SSD domain. Residues 252 to 261 (FMSMRQLGSR) are Cytoplasmic-facing. Residues 262 to 282 (FWLAYSVLLSGFFSLFFGLKV) traverse the membrane as a helical segment. Residues 283–287 (TTSSG) lie on the Lumenal side of the membrane. Residues 288–308 (VSTSMITLSECLPILVIIVGF) form a helical membrane-spanning segment. Topologically, residues 309–355 (EKPIRLTRAVLRAATESYLPAKPMARRSTPEAIEVAIMREGWRIVRD) are cytoplasmic. The chain crosses the membrane as a helical span at residues 356–375 (YAIEIAILAAGATSRVQGAL). Residues 376 to 377 (PQ) are Lumenal-facing. A helical membrane pass occupies residues 378–398 (FCFLAAWILLFDSLLLFTFYI). The Cytoplasmic segment spans residues 399 to 450 (SVLCVKLEITRIRKHVEPRRALEDDDISTGNQDFDSRVFGCKVKAANISRFK). Residues 451–471 (FLMVGGFVLFNVLQLSSLTYG) form a helical membrane-spanning segment. The Lumenal portion of the chain corresponds to 472–564 (NVRVSDWMPY…GCVLAWLEDP (93 aa)). Residue Asn-484 is glycosylated (N-linked (GlcNAc...) asparagine). A helical membrane pass occupies residues 565 to 585 (VISKWVIAALFLSLVLNSYLM). The Cytoplasmic portion of the chain corresponds to 586-1062 (KAARWNLRQS…NRSKVAAKTG (477 aa)). The active-site Charge relay system is Glu-744. 750–756 (SASRGCK) provides a ligand contact to CoA. NADP(+)-binding positions include 811–813 (SRF) and 838–846 (DAMGMNMIS). Lys-877 serves as the catalytic Charge relay system. 906-908 (VLK) serves as a coordination point for CoA. The active-site Charge relay system is the Asp-953. 1048-1049 (AH) serves as a coordination point for CoA. The active-site Proton donor is the His-1049. 1053–1054 (NR) serves as a coordination point for NADP(+).

The protein belongs to the HMG-CoA reductase family.

Its subcellular location is the endoplasmic reticulum membrane. The enzyme catalyses (R)-mevalonate + 2 NADP(+) + CoA = (3S)-3-hydroxy-3-methylglutaryl-CoA + 2 NADPH + 2 H(+). It participates in metabolic intermediate biosynthesis; (R)-mevalonate biosynthesis; (R)-mevalonate from acetyl-CoA: step 3/3. In terms of biological role, HMG-CoA reductase; part of the first module of ergosterol biosynthesis pathway that includes the early steps of the pathway, conserved across all eukaryotes, and which results in the formation of mevalonate from acetyl-coenzyme A (acetyl-CoA). Hmg1 and hmg2 catalyze the reduction of hydroxymethylglutaryl-CoA (HMG-CoA) to mevalonate. The first module starts with the action of the cytosolic acetyl-CoA acetyltransferase erg10B that catalyzes the formation of acetoacetyl-CoA. The hydroxymethylglutaryl-CoA synthases erg13A and erg13B then condense acetyl-CoA with acetoacetyl-CoA to form HMG-CoA. The rate-limiting step of the early module is the reduction to mevalonate by the 3-hydroxy-3-methylglutaryl-coenzyme A (HMG-CoA) reductases hmg1 and hmg2. Mevalonate is also a precursor for the extracellular siderophore triacetylfusarinine C (TAFC). This Aspergillus fumigatus (strain ATCC MYA-4609 / CBS 101355 / FGSC A1100 / Af293) (Neosartorya fumigata) protein is 3-hydroxy-3-methylglutaryl-coenzyme A reductase 2.